The following is a 46-amino-acid chain: Protein PsbN (46 aa).

A helical membrane pass occupies residues 10-30; the sequence is VAIAVLAALLGLTGFGVYTAF.

The protein belongs to the PsbN family.

The protein resides in the cellular thylakoid membrane. Functionally, may play a role in photosystem I and II biogenesis. The polypeptide is Protein PsbN (Synechococcus sp. (strain WH7803)).